A 109-amino-acid chain; its full sequence is Iron-sulfur assembly protein IscA-like 3, mitochondrial (109 aa).

Residues 1-18 (MRKQVLALSDTAAARIRQ) constitute a mitochondrion transit peptide. 3 residues coordinate Fe cation: Cys37, Cys100, and Cys102.

It belongs to the HesB/IscA family. In terms of assembly, homodimer; may form tetramers and higher multimers. Fe cation is required as a cofactor.

The protein localises to the mitochondrion. Its function is as follows. Involved in the assembly of mitochondrial iron-sulfur proteins. Probably involved in the binding of an intermediate of Fe/S cluster assembly. The sequence is that of Iron-sulfur assembly protein IscA-like 3, mitochondrial from Arabidopsis thaliana (Mouse-ear cress).